We begin with the raw amino-acid sequence, 353 residues long: Phospho-furanose lactonase (353 aa).

Zn(2+)-binding residues include H25, H27, K153, H186, and H214. K153 is modified (N6-carboxylysine). 244-245 serves as a coordination point for substrate; it reads KY. D272 is a binding site for Zn(2+). A substrate-binding site is contributed by 275-278; the sequence is RILY.

This sequence belongs to the metallo-dependent hydrolases superfamily. Phosphotriesterase family. It depends on Zn(2+) as a cofactor.

It catalyses the reaction a 1,4-lactone + H2O = a 4-hydroxyacid + H(+). It carries out the reaction D-xylono-1,4-lactone 5-phosphate + H2O = 5-phospho-D-xylonate + H(+). The enzyme catalyses L-arabino-1,4-lactone 5-phosphate + H2O = 5-phospho-L-arabinonate + H(+). In terms of biological role, catalyzes the hydrolysis of D-xylono-1,4-lactone-5-phosphate and L-arabino-1,4-lactone-5-phosphate. Also able to hydrolyze carboxy 1,4-lactones. This chain is Phospho-furanose lactonase, found in Mycoplasmopsis agalactiae (strain NCTC 10123 / CIP 59.7 / PG2) (Mycoplasma agalactiae).